Consider the following 313-residue polypeptide: Protein-methionine-sulfoxide reductase catalytic subunit MsrP (313 aa).

Positions 1–44 (MARWRPDTAEREATPEALYLRRREFLALGAAGAVGLLLPRGARA) form a signal peptide, tat-type signal. Mo-molybdopterin contacts are provided by residues Asn76, 79–80 (YE), Cys134, Thr169, Asn217, Arg222, and 233–235 (GAK).

It belongs to the MsrP family. Heterodimer of a catalytic subunit (MsrP) and a heme-binding subunit (MsrQ). It depends on Mo-molybdopterin as a cofactor. In terms of processing, predicted to be exported by the Tat system. The position of the signal peptide cleavage has not been experimentally proven.

The protein resides in the periplasm. It catalyses the reaction L-methionyl-[protein] + a quinone + H2O = L-methionyl-(S)-S-oxide-[protein] + a quinol. The enzyme catalyses L-methionyl-[protein] + a quinone + H2O = L-methionyl-(R)-S-oxide-[protein] + a quinol. Functionally, part of the MsrPQ system that repairs oxidized periplasmic proteins containing methionine sulfoxide residues (Met-O), using respiratory chain electrons. Thus protects these proteins from oxidative-stress damage caused by reactive species of oxygen and chlorine generated by the host defense mechanisms. MsrPQ is essential for the maintenance of envelope integrity under bleach stress, rescuing a wide series of structurally unrelated periplasmic proteins from methionine oxidation. The catalytic subunit MsrP is non-stereospecific, being able to reduce both (R-) and (S-) diastereoisomers of methionine sulfoxide. This Anaeromyxobacter dehalogenans (strain 2CP-C) protein is Protein-methionine-sulfoxide reductase catalytic subunit MsrP.